We begin with the raw amino-acid sequence, 547 residues long: Cytochrome P450 monooxygenase oblB (547 aa).

The next 2 membrane-spanning stretches (helical) occupy residues 42-62 (GAVG…RLFL) and 242-262 (FDMF…PWLI). Asn277 carries an N-linked (GlcNAc...) asparagine glycan. Residues 345 to 365 (VLIGSGTMTTAGTMGFLCYYI) traverse the membrane as a helical segment. Cys489 is a binding site for heme.

This sequence belongs to the cytochrome P450 family. Heme serves as cofactor.

The protein resides in the membrane. It carries out the reaction ophiobolin F + 4 reduced [NADPH--hemoprotein reductase] + 4 O2 = ophiobolin C + 4 oxidized [NADPH--hemoprotein reductase] + 6 H2O + 4 H(+). It functions in the pathway secondary metabolite biosynthesis; terpenoid biosynthesis. Functionally, cytochrome P450 monooxygenase; part of the gene cluster that mediates the biosynthesis of the sesterterpenes ophiobolins, fungal phytotoxins with potential anti-cancer activities. The first step of the pathway is performed by the sesterterpene synthase oblA that possesses both prenyl transferase and terpene cyclase activity, converting isopentenyl diphosphate and dimethylallyl diphosphate into geranylfarnesyl diphosphate (GFPP) and further converting GFPP into ophiobolin F, respectively. Other sesterterpenoids (C(25) terpenoids) are found as minor products of oblA. The cytochrome P450 monooxygenase oblB then catalyzes a four-step oxidative transformation of ophiobolin F to yield ophiobolin C. The function of the cytochrome P450 monooxygenase oblE has still to be determined. In Emericella variicolor (Aspergillus stellatus), this protein is Cytochrome P450 monooxygenase oblB.